The following is a 1099-amino-acid chain: SLIT-ROBO Rho GTPase-activating protein 3 (1099 aa).

In terms of domain architecture, F-BAR spans 19-314; the sequence is AQIKEIRTQL…AVDNLDSRSD (296 aa). Residues 352–392 adopt a coiled-coil conformation; that stretch reads QTELLMRYHQLQSRLATLKIENEEVRKTLDATMQTLQDMLT. The disordered stretch occupies residues 470-493; it reads GERAECGTTRPPCLPPKPQKMRRP. The 189-residue stretch at 506–694 folds into the Rho-GAP domain; the sequence is GSMEAFIKDS…TIIIHHEAIF (189 aa). The SH3 domain maps to 744–803; it reads VEQIEAIAKFDYVGRSPRELSFKKGASLLLYHRASEDWWEGRHNGVDGLIPHQYIVVQDM. Residues 809 to 820 show a composition bias toward polar residues; that stretch reads DSLSQKADSEAS. Residues 809 to 846 form a disordered region; that stretch reads DSLSQKADSEASSGPLLDDKASSKNDLQSPTEHISDYG. 5 positions are modified to phosphoserine: Ser-817, Ser-820, Ser-821, Ser-837, and Ser-858. The disordered stretch occupies residues 861-911; it reads AAIPRRRSGGDTHSPPRGLGPSIDTPPRAAACPSSPHKIPLSRGRIESPEK. Positions 952 to 987 form a coiled coil; the sequence is HKSLEAEALAEDIEKTMSTALHELRELERQNTVKQA. Ser-954 carries the phosphoserine modification. Disordered stretches follow at residues 994–1014 and 1045–1099; these read TLEP…SPLH and ARLA…SGTM. Residues 1060 to 1074 are compositionally biased toward low complexity; that stretch reads VRPVVQHRSSSSSSS. The segment covering 1089 to 1099 has biased composition (polar residues); that stretch reads PNSSSDKSGTM.

As to quaternary structure, homodimer. Forms a heterooligomer with SRGAP1 and SRGAP2 through its F-BAR domain. Interacts with WASF1. Probably interacts with ROBO1. Interacts with FASLG.

Functionally, GTPase-activating protein for RAC1 and perhaps CDC42, but not for RhoA small GTPase. May attenuate RAC1 signaling in neurons. In Mus musculus (Mouse), this protein is SLIT-ROBO Rho GTPase-activating protein 3 (Srgap3).